The primary structure comprises 354 residues: MAPTAAAGLAARDASGHLSPLTISRRSTGDDDVVIKILYCGICHSDLHSIKNEWKNATYPLVPGHEIAGVVTEAGKNVTKFKGGDKVGVGCMVNSCHSCDSCNQGLENHCPGVIFTYNSVDKDGTVTYGGYSSMVVVHERFVVRFPEAMPLDKGAPLLCAGITVYSPMKYHGLNVPSKHVGVLGLGGLGHVAVKFAKAFGMTVTVISSSPGKRQEALERLGADAFVVSKNADEMNAATGTMDGIINTVSANIPIAPLLGLLKPNGKMILVGLPEKPMEIPPFALVASNKTLAGSCIGGMADTEMIDLAAKHGVTAEIEVIGADYVNTAMERLAKADVRYRFVIDIGNTLKDAIE.

Cys-43 lines the Zn(2+) pocket. Ser-45 contacts NADP(+). Zn(2+) is bound by residues His-65, Glu-66, Cys-96, Cys-99, Cys-102, Cys-110, and Cys-159. Residues Thr-163, 184–189, 207–212, Thr-247, Gly-271, and 294–296 each bind NADP(+); these read GLGGLG, SSSPGK, and SCI.

The protein belongs to the zinc-containing alcohol dehydrogenase family. Homodimer. Zn(2+) is required as a cofactor.

The enzyme catalyses (E)-cinnamyl alcohol + NADP(+) = (E)-cinnamaldehyde + NADPH + H(+). It carries out the reaction (E)-coniferol + NADP(+) = (E)-coniferaldehyde + NADPH + H(+). It catalyses the reaction (E)-sinapyl alcohol + NADP(+) = (E)-sinapaldehyde + NADPH + H(+). The catalysed reaction is (E)-4-coumaroyl alcohol + NADP(+) = (E)-4-coumaraldehyde + NADPH + H(+). The enzyme catalyses (E)-caffeyl alcohol + NADP(+) = (E)-caffeyl aldehyde + NADPH + H(+). It participates in aromatic compound metabolism; phenylpropanoid biosynthesis. Its function is as follows. Involved in lignin biosynthesis. Catalyzes the final step specific for the production of lignin monomers. Catalyzes the NADPH-dependent reduction of coniferaldehyde, 5-hydroxyconiferaldehyde, sinapaldehyde, 4-coumaraldehyde and caffeyl aldehyde to their respective alcohols. This is Probable cinnamyl alcohol dehydrogenase 5 from Oryza sativa subsp. japonica (Rice).